The sequence spans 339 residues: Anthranilate phosphoribosyltransferase (339 aa).

5-phospho-alpha-D-ribose 1-diphosphate is bound by residues Gly86, 89–90, Thr94, 96–99, 114–122, and Ser126; these read GD, NIST, and KHGNRGVSS. Anthranilate is bound at residue Gly86. Ser98 serves as a coordination point for Mg(2+). Asn117 lines the anthranilate pocket. Arg172 lines the anthranilate pocket. Mg(2+) contacts are provided by Asp230 and Glu231.

The protein belongs to the anthranilate phosphoribosyltransferase family. Homodimer. It depends on Mg(2+) as a cofactor.

The catalysed reaction is N-(5-phospho-beta-D-ribosyl)anthranilate + diphosphate = 5-phospho-alpha-D-ribose 1-diphosphate + anthranilate. It functions in the pathway amino-acid biosynthesis; L-tryptophan biosynthesis; L-tryptophan from chorismate: step 2/5. Catalyzes the transfer of the phosphoribosyl group of 5-phosphorylribose-1-pyrophosphate (PRPP) to anthranilate to yield N-(5'-phosphoribosyl)-anthranilate (PRA). In Photobacterium profundum (strain SS9), this protein is Anthranilate phosphoribosyltransferase.